Consider the following 301-residue polypeptide: Glutamyl-Q tRNA(Asp) synthetase (301 aa).

L-glutamate is bound by residues 9 to 13 (RFAPS) and Glu45. The 'HIGH' region signature appears at 12–22 (PSPTGPLHLGS). The Zn(2+) site is built by Cys101, Cys103, Tyr121, and Cys125. Residues Tyr179 and Arg197 each contribute to the L-glutamate site. The short motif at 235 to 239 (KLSKQ) is the 'KMSKS' region element. Lys238 is an ATP binding site.

This sequence belongs to the class-I aminoacyl-tRNA synthetase family. GluQ subfamily. The cofactor is Zn(2+).

Catalyzes the tRNA-independent activation of glutamate in presence of ATP and the subsequent transfer of glutamate onto a tRNA(Asp). Glutamate is transferred on the 2-amino-5-(4,5-dihydroxy-2-cyclopenten-1-yl) moiety of the queuosine in the wobble position of the QUC anticodon. The sequence is that of Glutamyl-Q tRNA(Asp) synthetase from Thiobacillus denitrificans (strain ATCC 25259 / T1).